Reading from the N-terminus, the 353-residue chain is Sesquiterpene synthase Agr8 (353 aa).

Residues aspartate 82, asparagine 220, serine 224, and glutamate 228 each coordinate Mg(2+). Residues 82-86 (DEYTD) carry the DDXXD motif motif. Positions 309 and 310 each coordinate (2E,6E)-farnesyl diphosphate.

The protein belongs to the terpene synthase family. Mg(2+) serves as cofactor.

It carries out the reaction (2E,6E)-farnesyl diphosphate = gamma-muurolene + diphosphate. It catalyses the reaction (2E,6E)-farnesyl diphosphate = alpha-selinene + diphosphate. The catalysed reaction is (2E,6E)-farnesyl diphosphate = delta-cadinene + diphosphate. Terpene cyclase that catalyzes the cyclization of farnesyl diphosphate (FPP) to various sesquiterpenes, including beta-elemene, gamma-muurolene, alpha-selinene, beta-selinene, beta-cadinene, delta-cadinene and alpha-cadinol. The polypeptide is Sesquiterpene synthase Agr8 (Cyclocybe aegerita (Black poplar mushroom)).